Here is a 78-residue protein sequence, read N- to C-terminus: Acyl carrier protein (78 aa).

The Carrier domain occupies 2–77 (SSIEERVKKI…LAIDYINANL (76 aa)). Ser37 is modified (O-(pantetheine 4'-phosphoryl)serine).

Belongs to the acyl carrier protein (ACP) family. 4'-phosphopantetheine is transferred from CoA to a specific serine of apo-ACP by AcpS. This modification is essential for activity because fatty acids are bound in thioester linkage to the sulfhydryl of the prosthetic group.

The protein localises to the cytoplasm. It participates in lipid metabolism; fatty acid biosynthesis. Functionally, carrier of the growing fatty acid chain in fatty acid biosynthesis. The polypeptide is Acyl carrier protein (Cellvibrio japonicus (strain Ueda107) (Pseudomonas fluorescens subsp. cellulosa)).